A 217-amino-acid polypeptide reads, in one-letter code: Putative thymidylate synthase (217 aa).

The active site involves C139.

It belongs to the thymidylate synthase family. Archaeal-type ThyA subfamily. In terms of assembly, monomer.

Its subcellular location is the cytoplasm. It participates in pyrimidine metabolism; dTTP biosynthesis. Functionally, may catalyze the biosynthesis of dTMP using an unknown cosubstrate. This Methanococcoides burtonii (strain DSM 6242 / NBRC 107633 / OCM 468 / ACE-M) protein is Putative thymidylate synthase.